The following is a 203-amino-acid chain: Inactive ribonuclease-like protein 9 (203 aa).

The N-terminal stretch at 1–25 is a signal peptide; sequence MRTPITTHSLLLLLLLQQLLQPVQL. 3 disulfide bridges follow: C96-C151, C114-C166, and C121-C128. Residues N129 and N141 are each glycosylated (N-linked (GlcNAc...) asparagine).

It belongs to the pancreatic ribonuclease family.

The protein localises to the secreted. Its function is as follows. Does not exhibit any ribonuclease activity. This is Inactive ribonuclease-like protein 9 (RNASE9) from Macaca assamensis (Assam macaque).